Reading from the N-terminus, the 1020-residue chain is Calcium-transporting ATPase 1 (1020 aa).

Methionine 1 bears the N-acetylmethionine mark. The Stromal portion of the chain corresponds to 1-162 (MESYLNENFG…NQFTESPSRG (162 aa)). An interaction with calmodulin region spans residues 21 to 32 (ALQRWRKLCWIV). Serine 46 is subject to Phosphoserine; by CPK. A helical membrane pass occupies residues 163–183 (FWLFVWEALQDTTLMILAACA). The Lumenal portion of the chain corresponds to 184–201 (FVSLIVGILMEGWPIGAH). A helical membrane pass occupies residues 202–222 (DGLGIVASILLVVFVTATSDY). Topologically, residues 223–350 (RQSLQFKDLD…DDETPLQVKL (128 aa)) are stromal. A helical transmembrane segment spans residues 351–370 (NGVATIIGKIGLFFAVITFA). The Lumenal segment spans residues 371-400 (VLVQGLANQKRLDNSHWIWTADELMAMLEY). A helical membrane pass occupies residues 401–418 (FAVAVTIVVVAVPEGLPL). At 419–813 (AVTLSLAFAM…KWGRSVYINI (395 aa)) the chain is on the stromal side. Aspartate 456 serves as the catalytic 4-aspartylphosphate intermediate. Mg(2+) contacts are provided by aspartate 758 and aspartate 762. A helical membrane pass occupies residues 814-832 (QKFVQFQLTVNVVALIVNF). At 833–843 (LSACLTGNAPL) the chain is on the lumenal side. A helical membrane pass occupies residues 844–864 (TAVQLLWVNMIMDTLGALALA). Topologically, residues 865–884 (TEPPQDDLMKRSPVGRKGNF) are stromal. The helical transmembrane segment at 885-907 (ISNVMWRNILGQSLYQLVIIWCL) threads the bilayer. Topologically, residues 908–919 (QTKGKTMFGLDG) are lumenal. Residues 920–941 (PDSDLTLNTLIFNIFVFCQVFN) traverse the membrane as a helical segment. Over 942–959 (EISSREMEKIDVFKGILK) the chain is Stromal. A helical transmembrane segment spans residues 960–981 (NYVFVAVLTCTVVFQVIIIELL). Residues 982 to 991 (GTFADTTPLN) lie on the Lumenal side of the membrane. A helical membrane pass occupies residues 992-1013 (LGQWLVSIILGFLGMPVAAALK). At 1014–1020 (MIPVGSH) the chain is on the stromal side.

The protein belongs to the cation transport ATPase (P-type) (TC 3.A.3) family. Type IIB subfamily. In terms of tissue distribution, expressed at higher levels in roots than in leaves.

It is found in the plastid. It localises to the chloroplast inner membrane. It catalyses the reaction Ca(2+)(in) + ATP + H2O = Ca(2+)(out) + ADP + phosphate + H(+). Activated by calmodulin. In terms of biological role, this magnesium-dependent enzyme catalyzes the hydrolysis of ATP coupled with the translocation of calcium from the cytosol out of the cell or into organelles. The protein is Calcium-transporting ATPase 1 (ACA1) of Arabidopsis thaliana (Mouse-ear cress).